A 455-amino-acid chain; its full sequence is Post-transcriptional regulator MTA (455 aa).

Positions 17–163 (DSVSSSEFDE…QVNCQRQDDD (147 aa)) are disordered. A compositionally biased stretch (acidic residues) spans 23–42 (EFDESRDDETDAPTLEDEQL). Low complexity predominate over residues 88–98 (SPLSRPRSPSP). 3 short sequence motifs (nuclear localization signal) span residues 101–107 (RYGKKIK), 121–130 (KRPRRRPRDR), and 143–152 (RAAPKRATRR). Zn(2+) is bound by residues Cys333, His423, Cys427, and Cys432. The CHC2-type zinc-finger motif lies at 333 to 432 (CVFDKQSELA…HHSLCRNSEC (100 aa)).

It belongs to the HHV-1 ICP27 protein family. As to quaternary structure, homodimer. Homodimerization is required for transactivation. Interacts with host ALYREF. Associates in a complex with RNA, and host export factors NXF1/TAP and ALYREF; these interactions allow nuclear export of viral transcripts. Interacts with protein K-bZIP/K8; this interaction promotes viral gene expression during lytic infection. Interacts with host PABPC1. Interacts with host AGO2 and TNRC6A; these interactions inhibit host P-body formation. Interacts with PRKRA and EIF2AK2/PKR; these interactions inhibit host stress granule formation. Proteolytically cleaved by host caspase-7 (CASP7), leading to its inactivation, thereby preventing expression of viral lytic genes.

It is found in the host cytoplasm. Its subcellular location is the host nucleus. Its function is as follows. Post-transcriptional regulator that plays an essential role in the expression of viral lytic genes and productive viral replication. Possesses numerous activities that promote the expression of viral genes including enhancement of RNA stability, promotion of RNA splicing and stimulation of protein translation often via its ability to interact with different cellular cofactors. Stabilizes polyadenylated nuclear (PAN) RNA by cooperative binding to a 9-nt core of the MRE (MTA responsive element) together with host PABPC1. Functions as a viral splicing factor and promotes expression of intron-containing viral lytic genes. Protects viral transcripts from specific nuclear RNA decay pathways by preventing host MTREX recruitment that promotes unwinding and degradation of structured RNA substrates. Plays a role in the inhibition of host P-body formation by altering the scaffolding activity of TNRC6A at the initial stage thereby enhancing virus production. Also inhibits host stress granule formation by blocking autophosphorylation of EIF2AK2/PKR and its subsequent binding to dsRNA. This is Post-transcriptional regulator MTA from Human herpesvirus 8 type P (isolate GK18) (HHV-8).